The chain runs to 256 residues: uncharacterized protein (256 aa).

The N-terminal stretch at 1–24 (MIKRVNKLVLGISLLFLVISITAG) is a signal peptide. Cysteine 25 is lipidated: N-palmitoyl cysteine. Residue cysteine 25 is the site of S-diacylglycerol cysteine attachment.

Belongs to the staphylococcal tandem lipoprotein family.

It is found in the cell membrane. This is an uncharacterized protein from Staphylococcus aureus.